Here is a 209-residue protein sequence, read N- to C-terminus: MSSQYSNVENLSPQTIRQVMRELQEMETTPPEGIKVLINESDVTDIQALIDGPAGTPYAAGIFRVKLTLNKDFPLTPPKAYFLTKIFHPNVAANGEICVNTLKKDWKPDLGIKHILLTIKCLLIVPNPESALNEEAGKMLLERYDDYSQRARMMTEIHAQPAKCGVGAVGDAKDDGGPSTKKHAGLDKKLQDKKKEKLLKEKKRMLKRL.

In terms of domain architecture, UBC core spans 14-160 (QTIRQVMREL…ARMMTEIHAQ (147 aa)). Cys-98 serves as the catalytic Glycyl thioester intermediate. The interval 168–194 (AVGDAKDDGGPSTKKHAGLDKKLQDKK) is disordered. Residues 184-194 (AGLDKKLQDKK) show a composition bias toward basic and acidic residues.

Belongs to the ubiquitin-conjugating enzyme family.

The catalysed reaction is S-ubiquitinyl-[E1 ubiquitin-activating enzyme]-L-cysteine + [E2 ubiquitin-conjugating enzyme]-L-cysteine = [E1 ubiquitin-activating enzyme]-L-cysteine + S-ubiquitinyl-[E2 ubiquitin-conjugating enzyme]-L-cysteine.. It participates in protein modification; protein ubiquitination. Its function is as follows. Catalyzes the covalent attachment of ubiquitin to other proteins. Acts as an essential factor of the anaphase promoting complex/cyclosome (APC/C), a cell cycle-regulated ubiquitin ligase that controls progression through mitosis. Acts by specifically elongating polyubiquitin chains initiated by the E2 enzyme vih/UbcH10 on APC/C substrates, enhancing the degradation of APC/C substrates by the proteasome and promoting mitotic exit. This is Ubiquitin-conjugating enzyme E2 S from Drosophila melanogaster (Fruit fly).